The sequence spans 165 residues: SsrA-binding protein (165 aa).

Belongs to the SmpB family.

It is found in the cytoplasm. Its function is as follows. Required for rescue of stalled ribosomes mediated by trans-translation. Binds to transfer-messenger RNA (tmRNA), required for stable association of tmRNA with ribosomes. tmRNA and SmpB together mimic tRNA shape, replacing the anticodon stem-loop with SmpB. tmRNA is encoded by the ssrA gene; the 2 termini fold to resemble tRNA(Ala) and it encodes a 'tag peptide', a short internal open reading frame. During trans-translation Ala-aminoacylated tmRNA acts like a tRNA, entering the A-site of stalled ribosomes, displacing the stalled mRNA. The ribosome then switches to translate the ORF on the tmRNA; the nascent peptide is terminated with the 'tag peptide' encoded by the tmRNA and targeted for degradation. The ribosome is freed to recommence translation, which seems to be the essential function of trans-translation. This is SsrA-binding protein from Prochlorococcus marinus (strain MIT 9515).